The primary structure comprises 829 residues: DNA topoisomerase 1 (829 aa).

Residues 1 to 248 (MSEDHVQNDS…AKGNEEGVKK (248 aa)) form a disordered region. Over residues 22-36 (HKHKKDKEHRHKEHK) the composition is skewed to basic residues. 3 stretches are compositionally biased toward basic and acidic residues: residues 37–58 (KDKD…SEKK), 68–159 (KHRE…EKMK), and 193–220 (KENK…DDKK). 3 interaction with DNA regions span residues 481-482 (KY), 544-549 (RAGNEK), and 641-643 (TAK). Residues 488–821 (SSRIKGEKDW…SIWQTTTSNF (334 aa)) enclose the Topo IB-type catalytic domain. Tyr779 functions as the O-(3'-phospho-DNA)-tyrosine intermediate in the catalytic mechanism.

Belongs to the type IB topoisomerase family. In terms of assembly, monomer.

The protein resides in the nucleus. The catalysed reaction is ATP-independent breakage of single-stranded DNA, followed by passage and rejoining.. Releases the supercoiling and torsional tension of DNA introduced during the DNA replication and transcription by transiently cleaving and rejoining one strand of the DNA duplex. Introduces a single-strand break via transesterification at a target site in duplex DNA. The scissile phosphodiester is attacked by the catalytic tyrosine of the enzyme, resulting in the formation of a DNA-(3'-phosphotyrosyl)-enzyme intermediate and the expulsion of a 5'-OH DNA strand. TThe free DNA strand then rotates around the intact phosphodiester bond on the opposing strand, thus removing DNA supercoils. Finally, in the religation step, the DNA 5'-OH attacks the covalent intermediate to expel the active-site tyrosine and restore the DNA phosphodiester backbone. May play a role in the circadian transcription of the core circadian clock component BMAL1. This chain is DNA topoisomerase 1 (top1), found in Xenopus laevis (African clawed frog).